The chain runs to 399 residues: Arylacetamide deacetylase (399 aa).

Residues 1–4 lie on the Cytoplasmic side of the membrane; sequence MRKK. Residues 5-25 form a helical; Signal-anchor for type II membrane protein membrane-spanning segment; sequence YFGFLILGVLLAGYIYVPLPD. At 26–399 the chain is on the lumenal side; it reads NVEEPWKIML…QYINWLHENL (374 aa). An Involved in the stabilization of the negatively charged intermediate by the formation of the oxyanion hole motif is present at residues 111–113; sequence HGG. Residues Cys116 and Cys340 are joined by a disulfide bond. Ser189 is an active-site residue. Asn282 carries N-linked (GlcNAc...) asparagine glycosylation. Active-site residues include Asp343 and His373.

Belongs to the 'GDXG' lipolytic enzyme family.

Its subcellular location is the endoplasmic reticulum membrane. It localises to the microsome membrane. The enzyme catalyses a triacylglycerol + H2O = a diacylglycerol + a fatty acid + H(+). Displays cellular triglyceride lipase activity in liver, increases the levels of intracellular fatty acids derived from the hydrolysis of newly formed triglyceride stores and plays a role in very low-density lipoprotein assembly. Displays serine esterase activity in liver. Deacetylates a variety of arylacetamide substrates, including xenobiotic compounds and procarcinogens, converting them to the primary arylamide compounds and increasing their toxicity. This is Arylacetamide deacetylase (AADAC) from Bos taurus (Bovine).